Reading from the N-terminus, the 76-residue chain is Sec-independent protein translocase protein TatA (76 aa).

Residues 1–21 (MGSFSIWHWLIVLLIVVLVFG) traverse the membrane as a helical segment. A disordered region spans residues 44 to 76 (RDGSTAPADPAQQVTANKSADANTVDVEAKQKS). The span at 55–65 (QQVTANKSADA) shows a compositional bias: polar residues.

This sequence belongs to the TatA/E family. As to quaternary structure, the Tat system comprises two distinct complexes: a TatABC complex, containing multiple copies of TatA, TatB and TatC subunits, and a separate TatA complex, containing only TatA subunits. Substrates initially bind to the TatABC complex, which probably triggers association of the separate TatA complex to form the active translocon.

Its subcellular location is the cell inner membrane. Part of the twin-arginine translocation (Tat) system that transports large folded proteins containing a characteristic twin-arginine motif in their signal peptide across membranes. TatA could form the protein-conducting channel of the Tat system. This chain is Sec-independent protein translocase protein TatA, found in Methylibium petroleiphilum (strain ATCC BAA-1232 / LMG 22953 / PM1).